A 101-amino-acid polypeptide reads, in one-letter code: Ascorbate-specific PTS system EIIB component (101 aa).

Positions 3 to 96 constitute a PTS EIIB type-2 domain; sequence VRILAVCGNG…KLLKVIKEHF (94 aa). Cysteine 9 acts as the Phosphocysteine intermediate in catalysis. Cysteine 9 carries the phosphocysteine modification.

It localises to the cytoplasm. The catalysed reaction is N(pros)-phospho-L-histidyl-[protein] + L-ascorbate(out) = L-ascorbate 6-phosphate(in) + L-histidyl-[protein]. The phosphoenolpyruvate-dependent sugar phosphotransferase system (sugar PTS), a major carbohydrate active transport system, catalyzes the phosphorylation of incoming sugar substrates concomitantly with their translocation across the cell membrane. The enzyme II UlaABC PTS system is involved in ascorbate transport. The chain is Ascorbate-specific PTS system EIIB component (ulaB) from Shigella dysenteriae serotype 1 (strain Sd197).